Consider the following 181-residue polypeptide: Adenylyl-sulfate kinase (181 aa).

Residue 12-19 (GLSGAGKS) coordinates ATP. The active-site Phosphoserine intermediate is the serine 86.

It belongs to the APS kinase family.

It carries out the reaction adenosine 5'-phosphosulfate + ATP = 3'-phosphoadenylyl sulfate + ADP + H(+). The protein operates within sulfur metabolism; hydrogen sulfide biosynthesis; sulfite from sulfate: step 2/3. Functionally, catalyzes the synthesis of activated sulfate. The polypeptide is Adenylyl-sulfate kinase (Microcystis aeruginosa (strain NIES-843 / IAM M-2473)).